The following is a 583-amino-acid chain: Threonine--tRNA ligase (583 aa).

The tract at residues 185–478 is catalytic; the sequence is DHRKLGRELN…LVEHYGGAFP (294 aa). 3 residues coordinate Zn(2+): Cys-278, His-329, and His-455.

The protein belongs to the class-II aminoacyl-tRNA synthetase family. As to quaternary structure, homodimer. Zn(2+) serves as cofactor.

It is found in the cytoplasm. It carries out the reaction tRNA(Thr) + L-threonine + ATP = L-threonyl-tRNA(Thr) + AMP + diphosphate + H(+). Functionally, catalyzes the attachment of threonine to tRNA(Thr) in a two-step reaction: L-threonine is first activated by ATP to form Thr-AMP and then transferred to the acceptor end of tRNA(Thr). Also edits incorrectly charged L-seryl-tRNA(Thr). The polypeptide is Threonine--tRNA ligase (Borrelia recurrentis (strain A1)).